A 103-amino-acid chain; its full sequence is Large ribosomal subunit protein bL21 (103 aa).

Belongs to the bacterial ribosomal protein bL21 family. In terms of assembly, part of the 50S ribosomal subunit. Contacts protein L20.

Its function is as follows. This protein binds to 23S rRNA in the presence of protein L20. In Psychromonas ingrahamii (strain DSM 17664 / CCUG 51855 / 37), this protein is Large ribosomal subunit protein bL21.